The following is a 256-amino-acid chain: tRNA (guanine-N(7)-)-methyltransferase (256 aa).

The segment covering 1-11 (MHPQDASTEQT) has biased composition (polar residues). The disordered stretch occupies residues 1–35 (MHPQDASTEQTPVDDDQVESSQPVHAPEDVAHPRR). The S-adenosyl-L-methionine site is built by glutamate 85, glutamate 110, aspartate 137, and aspartate 160. The active site involves aspartate 160. Lysine 164 is a binding site for substrate. An interaction with RNA region spans residues 166 to 171 (RHNKRR). Substrate contacts are provided by residues aspartate 196 and 234 to 237 (TKFE).

It belongs to the class I-like SAM-binding methyltransferase superfamily. TrmB family.

The enzyme catalyses guanosine(46) in tRNA + S-adenosyl-L-methionine = N(7)-methylguanosine(46) in tRNA + S-adenosyl-L-homocysteine. It participates in tRNA modification; N(7)-methylguanine-tRNA biosynthesis. Catalyzes the formation of N(7)-methylguanine at position 46 (m7G46) in tRNA. The polypeptide is tRNA (guanine-N(7)-)-methyltransferase (Cupriavidus pinatubonensis (strain JMP 134 / LMG 1197) (Cupriavidus necator (strain JMP 134))).